We begin with the raw amino-acid sequence, 406 residues long: Indole-3-pyruvate monooxygenase YUCCA1 (406 aa).

21-26 (GAGPSG) lines the FAD pocket. An NADP(+)-binding site is contributed by 184 to 189 (GCGNSG).

It belongs to the FMO family. FAD is required as a cofactor. As to expression, expressed in coleoptile tips, root tips, leaf blade tips, shoot apical meristem, vasculature of stems and flowers.

It carries out the reaction indole-3-pyruvate + NADPH + O2 + H(+) = (indol-3-yl)acetate + CO2 + NADP(+) + H2O. Its function is as follows. Involved in auxin biosynthesis. Converts the indole-3-pyruvic acid (IPA) produced by the TAA family to indole-3-acetic acid (IAA). Functions downstream of TAR2 in auxin biosynthesis. Functions upstream of WOX11, a transcription factor that promotes the development of crown roots. The polypeptide is Indole-3-pyruvate monooxygenase YUCCA1 (Oryza sativa subsp. japonica (Rice)).